A 153-amino-acid polypeptide reads, in one-letter code: NADPH-dependent 7-cyano-7-deazaguanine reductase (153 aa).

Residues Met-1–Pro-17 are compositionally biased toward polar residues. The tract at residues Met-1–Ala-23 is disordered. The Thioimide intermediate role is filled by Cys-51. Residue Asp-58 is the Proton donor of the active site. Residues Val-73–Ser-75 and His-92–Glu-93 contribute to the substrate site.

This sequence belongs to the GTP cyclohydrolase I family. QueF type 1 subfamily.

It localises to the cytoplasm. The enzyme catalyses 7-aminomethyl-7-carbaguanine + 2 NADP(+) = 7-cyano-7-deazaguanine + 2 NADPH + 3 H(+). The protein operates within tRNA modification; tRNA-queuosine biosynthesis. Catalyzes the NADPH-dependent reduction of 7-cyano-7-deazaguanine (preQ0) to 7-aminomethyl-7-deazaguanine (preQ1). The sequence is that of NADPH-dependent 7-cyano-7-deazaguanine reductase from Chelativorans sp. (strain BNC1).